We begin with the raw amino-acid sequence, 296 residues long: Light-independent protochlorophyllide reductase iron-sulfur ATP-binding protein (296 aa).

ATP is bound by residues 39 to 44 (GIGKST) and K68. Position 43 (S43) interacts with Mg(2+). [4Fe-4S] cluster is bound by residues C124 and C158. Residue 209-210 (NR) participates in ATP binding.

This sequence belongs to the NifH/BchL/ChlL family. As to quaternary structure, homodimer. Protochlorophyllide reductase is composed of three subunits; ChlL, ChlN and ChlB. It depends on [4Fe-4S] cluster as a cofactor.

It catalyses the reaction chlorophyllide a + oxidized 2[4Fe-4S]-[ferredoxin] + 2 ADP + 2 phosphate = protochlorophyllide a + reduced 2[4Fe-4S]-[ferredoxin] + 2 ATP + 2 H2O. It functions in the pathway porphyrin-containing compound metabolism; chlorophyll biosynthesis (light-independent). Component of the dark-operative protochlorophyllide reductase (DPOR) that uses Mg-ATP and reduced ferredoxin to reduce ring D of protochlorophyllide (Pchlide) to form chlorophyllide a (Chlide). This reaction is light-independent. The L component serves as a unique electron donor to the NB-component of the complex, and binds Mg-ATP. This chain is Light-independent protochlorophyllide reductase iron-sulfur ATP-binding protein, found in Prochlorococcus marinus (strain SARG / CCMP1375 / SS120).